The primary structure comprises 306 residues: Natural cytotoxicity triggering receptor 1 (306 aa).

The first 21 residues, 1–21 (MSSTLRALLCLGLCLSQRISA), serve as a signal peptide directing secretion. Topologically, residues 22 to 257 (PKQTLPKPII…WDHTAQNLLR (236 aa)) are extracellular. 2 consecutive Ig-like domains span residues 42-100 (EKQA…SCIY) and 137-192 (GEKV…RCFG). Cystine bridges form between Cys49-Cys98 and Cys144-Cys190. Asn216 carries N-linked (GlcNAc...) asparagine glycosylation. Residues 258-278 (MGLAFLVLVALVCLLVEDWLS) traverse the membrane as a helical segment. Over 279-306 (RKRTREQASRASTWEGRRRLNKHKDSEE) the chain is Cytoplasmic.

This sequence belongs to the natural cytotoxicity receptor (NCR) family. As to quaternary structure, interacts with CD3Z and FCER1G. In terms of tissue distribution, expressed in NK cells.

Its subcellular location is the cell membrane. In terms of biological role, cytotoxicity-activating receptor that may contribute to the increased efficiency of activated natural killer (NK) cells to mediate tumor cell lysis. This Macaca fascicularis (Crab-eating macaque) protein is Natural cytotoxicity triggering receptor 1 (NCR1).